The sequence spans 292 residues: F-box only protein 16 (292 aa).

The F-box domain maps to 86–132 (LDFTTKLPRVLSLYIFSFLDPRSLCRCAQVCWHWKNLAELDQLWMLK). Disordered regions lie at residues 188–224 (SPEEKQSPLSAFRSSSSLRKKNNSGEKALPPWRSSDK) and 238–292 (RDPM…PLCP). The segment covering 194 to 204 (SPLSAFRSSSS) has biased composition (low complexity). Over residues 260 to 273 (RQSHDKKNKLQDRT) the composition is skewed to basic and acidic residues.

As to quaternary structure, part of a SCF (SKP1-cullin-F-box) protein ligase complex. As to expression, expressed in heart, spleen and colon.

Its function is as follows. Probably recognizes and binds to some phosphorylated proteins and promotes their ubiquitination and degradation. The sequence is that of F-box only protein 16 (FBXO16) from Homo sapiens (Human).